The sequence spans 254 residues: Phosphoglycerate mutase 1 (254 aa).

Residues R10–N17 and S23–G24 each bind substrate. The active-site Tele-phosphohistidine intermediate is H11. 2 positions are modified to phosphoserine: S14 and S23. Residue Y26 is modified to Phosphotyrosine. Phosphoserine is present on S31. Residues R62, E89 to Y92, and K100 each bind substrate. E89 functions as the Proton donor/acceptor in the catalytic mechanism. N6-acetyllysine is present on K106. R116–R117 provides a ligand contact to substrate. The residue at position 118 (S118) is a Phosphoserine. Substrate is bound at residue G187–N188. K251 carries the post-translational modification N6-acetyllysine; alternate. K251 bears the N6-succinyllysine; alternate mark. N6-acetyllysine is present on residues K253 and K254.

The protein belongs to the phosphoglycerate mutase family. BPG-dependent PGAM subfamily. As to quaternary structure, homodimer. In terms of processing, acetylated at Lys-253, Lys-253 and Lys-254 under high glucose condition. Acetylation increases catalytic activity. Under glucose restriction SIRT1 levels dramatically increase and it deacetylates the enzyme. In terms of tissue distribution, expressed in the liver and brain. Not found in the muscle.

The enzyme catalyses (2R)-2-phosphoglycerate = (2R)-3-phosphoglycerate. The catalysed reaction is (2R)-3-phospho-glyceroyl phosphate = (2R)-2,3-bisphosphoglycerate + H(+). In terms of biological role, catalyzes the interconversion of 2-phosphoglycerate and 3-phosphoglyceratea crucial step in glycolysis, by using 2,3-bisphosphoglycerate. Also catalyzes the interconversion of (2R)-2,3-bisphosphoglycerate and (2R)-3-phospho-glyceroyl phosphate. The chain is Phosphoglycerate mutase 1 from Homo sapiens (Human).